Here is a 158-residue protein sequence, read N- to C-terminus: NAD(P)H-quinone oxidoreductase subunit J, chloroplastic (158 aa).

This sequence belongs to the complex I 30 kDa subunit family. As to quaternary structure, NDH is composed of at least 16 different subunits, 5 of which are encoded in the nucleus.

The protein localises to the plastid. The protein resides in the chloroplast thylakoid membrane. It carries out the reaction a plastoquinone + NADH + (n+1) H(+)(in) = a plastoquinol + NAD(+) + n H(+)(out). The enzyme catalyses a plastoquinone + NADPH + (n+1) H(+)(in) = a plastoquinol + NADP(+) + n H(+)(out). In terms of biological role, NDH shuttles electrons from NAD(P)H:plastoquinone, via FMN and iron-sulfur (Fe-S) centers, to quinones in the photosynthetic chain and possibly in a chloroplast respiratory chain. The immediate electron acceptor for the enzyme in this species is believed to be plastoquinone. Couples the redox reaction to proton translocation, and thus conserves the redox energy in a proton gradient. The sequence is that of NAD(P)H-quinone oxidoreductase subunit J, chloroplastic from Lotus japonicus (Lotus corniculatus var. japonicus).